A 350-amino-acid polypeptide reads, in one-letter code: Ferredoxin--NADP reductase (350 aa).

FAD contacts are provided by Thr-25, Glu-44, Gln-52, Tyr-57, Val-97, Phe-132, Asp-298, and Ser-339.

It belongs to the ferredoxin--NADP reductase type 2 family. In terms of assembly, homodimer. It depends on FAD as a cofactor.

The catalysed reaction is 2 reduced [2Fe-2S]-[ferredoxin] + NADP(+) + H(+) = 2 oxidized [2Fe-2S]-[ferredoxin] + NADPH. The protein is Ferredoxin--NADP reductase of Chlorobium limicola (strain DSM 245 / NBRC 103803 / 6330).